We begin with the raw amino-acid sequence, 336 residues long: Phospho-N-acetylmuramoyl-pentapeptide-transferase (336 aa).

A run of 10 helical transmembrane segments spans residues 3-23 (LTLI…PYFI), 53-73 (GGTV…LFSI), 78-98 (SLAL…IGFL), 118-138 (LALQ…PSGI), 143-163 (VFGY…FWVV), 174-194 (GIDG…GVIA), 200-220 (FDVL…FCFN), 226-246 (VFMG…ISIA), 251-271 (WTLL…MLQV), and 316-336 (AFLW…LYVF).

It belongs to the glycosyltransferase 4 family. MraY subfamily. The cofactor is Mg(2+).

The protein localises to the cell membrane. The enzyme catalyses UDP-N-acetyl-alpha-D-muramoyl-L-alanyl-gamma-D-glutamyl-L-lysyl-D-alanyl-D-alanine + di-trans,octa-cis-undecaprenyl phosphate = Mur2Ac(oyl-L-Ala-gamma-D-Glu-L-Lys-D-Ala-D-Ala)-di-trans,octa-cis-undecaprenyl diphosphate + UMP. It functions in the pathway cell wall biogenesis; peptidoglycan biosynthesis. Functionally, catalyzes the initial step of the lipid cycle reactions in the biosynthesis of the cell wall peptidoglycan: transfers peptidoglycan precursor phospho-MurNAc-pentapeptide from UDP-MurNAc-pentapeptide onto the lipid carrier undecaprenyl phosphate, yielding undecaprenyl-pyrophosphoryl-MurNAc-pentapeptide, known as lipid I. This Streptococcus pyogenes serotype M1 protein is Phospho-N-acetylmuramoyl-pentapeptide-transferase.